Here is a 40-residue protein sequence, read N- to C-terminus: Dolichyl-diphosphooligosaccharide--protein glycosyltransferase subunit 4 (40 aa).

At 1 to 4 (MITD) the chain is on the lumenal side. The chain crosses the membrane as a helical span at residues 5 to 25 (VQLAIFSNVLGVFLFLLVVAY). At 26–40 (HYINANTGKSSPKAK) the chain is on the cytoplasmic side.

It belongs to the OST4 family. As to quaternary structure, component of the oligosaccharyltransferase (OST) complex.

The protein localises to the endoplasmic reticulum membrane. Subunit of the oligosaccharyl transferase (OST) complex that catalyzes the initial transfer of a defined glycan (Glc(3)Man(9)GlcNAc(2) in eukaryotes) from the lipid carrier dolichol-pyrophosphate to an asparagine residue within an Asn-X-Ser/Thr consensus motif in nascent polypeptide chains, the first step in protein N-glycosylation. N-glycosylation occurs cotranslationally and the complex associates with the Sec61 complex at the channel-forming translocon complex that mediates protein translocation across the endoplasmic reticulum (ER). All subunits are required for a maximal enzyme activity. The chain is Dolichyl-diphosphooligosaccharide--protein glycosyltransferase subunit 4 from Drosophila persimilis (Fruit fly).